The following is a 265-amino-acid chain: 5'-nucleotidase SurE (265 aa).

A divalent metal cation is bound by residues Asp8, Asp9, Ser39, and Asn96.

The protein belongs to the SurE nucleotidase family. A divalent metal cation serves as cofactor.

Its subcellular location is the cytoplasm. The catalysed reaction is a ribonucleoside 5'-phosphate + H2O = a ribonucleoside + phosphate. In terms of biological role, nucleotidase that shows phosphatase activity on nucleoside 5'-monophosphates. In Dehalococcoides mccartyi (strain ATCC BAA-2100 / JCM 16839 / KCTC 5957 / BAV1), this protein is 5'-nucleotidase SurE.